The primary structure comprises 197 residues: Na(+)-translocating NADH-quinone reductase subunit E (197 aa).

6 helical membrane-spanning segments follow: residues 11–31, 35–55, 76–96, 108–128, 139–159, and 175–195; these read SVFI…FLAV, VSTA…SVPA, FLKF…LEMF, LGIY…VSFM, VVYG…LAGI, and LGIT…FSGI.

Belongs to the NqrDE/RnfAE family. Composed of six subunits; NqrA, NqrB, NqrC, NqrD, NqrE and NqrF.

Its subcellular location is the cell inner membrane. The catalysed reaction is a ubiquinone + n Na(+)(in) + NADH + H(+) = a ubiquinol + n Na(+)(out) + NAD(+). Its function is as follows. NQR complex catalyzes the reduction of ubiquinone-1 to ubiquinol by two successive reactions, coupled with the transport of Na(+) ions from the cytoplasm to the periplasm. NqrA to NqrE are probably involved in the second step, the conversion of ubisemiquinone to ubiquinol. The chain is Na(+)-translocating NADH-quinone reductase subunit E from Neisseria meningitidis serogroup A / serotype 4A (strain DSM 15465 / Z2491).